The chain runs to 221 residues: N-(5'-phosphoribosyl)anthranilate isomerase (221 aa).

It belongs to the TrpF family.

It carries out the reaction N-(5-phospho-beta-D-ribosyl)anthranilate = 1-(2-carboxyphenylamino)-1-deoxy-D-ribulose 5-phosphate. It participates in amino-acid biosynthesis; L-tryptophan biosynthesis; L-tryptophan from chorismate: step 3/5. This chain is N-(5'-phosphoribosyl)anthranilate isomerase, found in Chlorobaculum parvum (strain DSM 263 / NCIMB 8327) (Chlorobium vibrioforme subsp. thiosulfatophilum).